Reading from the N-terminus, the 678-residue chain is GAS2-like protein 1 (678 aa).

At Ala-2 the chain carries N-acetylalanine. One can recognise a Calponin-homology (CH) domain in the interval 27–148 (EAMKEDLADW…CLLEVARRGA (122 aa)). The 73-residue stretch at 203–275 (NDLRNLDELV…HYLDKHDPCR (73 aa)) folds into the GAR domain. Positions 276–291 (CSSSTHRLPQQRTGTF) are enriched in polar residues. 2 disordered regions span residues 276-524 (CSSS…FRRL) and 538-678 (AASH…DSSM). A phosphoserine mark is found at Ser-306 and Ser-316. A compositionally biased stretch (basic and acidic residues) spans 327–340 (GTKEGPETPLRPRD). At Thr-334 the chain carries Phosphothreonine. Ser-352 and Ser-355 each carry phosphoserine. Positions 354 to 365 (DSDSSASSAQSG) are enriched in low complexity. Residues 370–381 (RSDDSATGSRRE) are compositionally biased toward basic and acidic residues. Low complexity predominate over residues 392–403 (PASPRRPTAPRS). Ser-394 is subject to Phosphoserine. Positions 404-413 (QSRDRLDRGR) are enriched in basic and acidic residues. 2 positions are modified to phosphoserine: Ser-436 and Ser-438. A compositionally biased stretch (basic and acidic residues) spans 437 to 454 (QSREEQAVLMVRRDRDGQ). Residues 461–471 (GRGGGGSGGSG) are compositionally biased toward gly residues. 2 positions are modified to phosphoserine: Ser-482 and Ser-489. The span at 485-495 (APRPSRGPSPG) shows a compositional bias: pro residues. At Arg-490 the chain carries Omega-N-methylarginine. Position 493 is a phosphoserine (Ser-493). At Thr-501 the chain carries Phosphothreonine. Arg-507 is subject to Omega-N-methylarginine. Low complexity-rich tracts occupy residues 509–519 (PLQLDPQQEQQ) and 554–568 (DSAY…SSLS). Residue Arg-630 is modified to Omega-N-methylarginine. The segment covering 631–641 (GRMDTQPDRKP) has biased composition (basic and acidic residues). Phosphoserine is present on Ser-654. Polar residues predominate over residues 666–678 (HSVTPRTEPDSSM).

Belongs to the GAS2 family. As to quaternary structure, interacts with MAPRE1.

It localises to the cytoplasm. The protein localises to the cytoskeleton. Its subcellular location is the stress fiber. Seems to be involved in the cross-linking of microtubules and microfilaments. Regulates microtubule dynamics and stability by interacting with microtubule plus-end tracking proteins, such as MAPRE1, to regulate microtubule growth along actin stress fibers. The chain is GAS2-like protein 1 (Gas2l1) from Mus musculus (Mouse).